Consider the following 134-residue polypeptide: Ribosome-binding factor A (134 aa).

This sequence belongs to the RbfA family. As to quaternary structure, monomer. Binds 30S ribosomal subunits, but not 50S ribosomal subunits or 70S ribosomes.

It localises to the cytoplasm. Functionally, one of several proteins that assist in the late maturation steps of the functional core of the 30S ribosomal subunit. Associates with free 30S ribosomal subunits (but not with 30S subunits that are part of 70S ribosomes or polysomes). Required for efficient processing of 16S rRNA. May interact with the 5'-terminal helix region of 16S rRNA. In Rhizobium johnstonii (strain DSM 114642 / LMG 32736 / 3841) (Rhizobium leguminosarum bv. viciae), this protein is Ribosome-binding factor A.